Reading from the N-terminus, the 411-residue chain is Phosphoglycerate kinase (411 aa).

Substrate contacts are provided by residues 28–30 (DIN), arginine 45, 68–71 (HQSR), arginine 125, and arginine 165. ATP-binding positions include glutamate 338 and 364–367 (GGHL).

The protein belongs to the phosphoglycerate kinase family. In terms of assembly, homodimer.

Its subcellular location is the cytoplasm. The catalysed reaction is (2R)-3-phosphoglycerate + ATP = (2R)-3-phospho-glyceroyl phosphate + ADP. Its pathway is carbohydrate degradation; glycolysis; pyruvate from D-glyceraldehyde 3-phosphate: step 2/5. The chain is Phosphoglycerate kinase (pgk) from Methanothermobacter thermautotrophicus (strain ATCC 29096 / DSM 1053 / JCM 10044 / NBRC 100330 / Delta H) (Methanobacterium thermoautotrophicum).